The sequence spans 486 residues: Probable glycine dehydrogenase (decarboxylating) subunit 2 (486 aa).

Lys-269 carries the post-translational modification N6-(pyridoxal phosphate)lysine.

Belongs to the GcvP family. C-terminal subunit subfamily. In terms of assembly, the glycine cleavage system is composed of four proteins: P, T, L and H. In this organism, the P 'protein' is a heterodimer of two subunits. It depends on pyridoxal 5'-phosphate as a cofactor.

It carries out the reaction N(6)-[(R)-lipoyl]-L-lysyl-[glycine-cleavage complex H protein] + glycine + H(+) = N(6)-[(R)-S(8)-aminomethyldihydrolipoyl]-L-lysyl-[glycine-cleavage complex H protein] + CO2. In terms of biological role, the glycine cleavage system catalyzes the degradation of glycine. The P protein binds the alpha-amino group of glycine through its pyridoxal phosphate cofactor; CO(2) is released and the remaining methylamine moiety is then transferred to the lipoamide cofactor of the H protein. In Chlorobaculum tepidum (strain ATCC 49652 / DSM 12025 / NBRC 103806 / TLS) (Chlorobium tepidum), this protein is Probable glycine dehydrogenase (decarboxylating) subunit 2.